We begin with the raw amino-acid sequence, 115 residues long: NTF2-related export protein 1 (115 aa).

Residues tyrosine 7–leucine 115 form the NTF2 domain.

It is found in the nucleus. Functionally, stimulator of protein export for NES-containing proteins. Also plays a role in mRNA nuclear export. In Schizosaccharomyces pombe (strain 972 / ATCC 24843) (Fission yeast), this protein is NTF2-related export protein 1 (nxt1).